The sequence spans 308 residues: GMP synthase [glutamine-hydrolyzing] subunit B (308 aa).

Residues 1-185 (MNWEKFVEEK…LGLPEKIYNR (185 aa)) form the GMPS ATP-PPase domain. An ATP-binding site is contributed by 28–34 (SGGVDSS).

As to quaternary structure, heterodimer composed of a glutamine amidotransferase subunit (A) and a GMP-binding subunit (B).

It carries out the reaction XMP + L-glutamine + ATP + H2O = GMP + L-glutamate + AMP + diphosphate + 2 H(+). It functions in the pathway purine metabolism; GMP biosynthesis; GMP from XMP (L-Gln route): step 1/1. Its function is as follows. Catalyzes the synthesis of GMP from XMP. The polypeptide is GMP synthase [glutamine-hydrolyzing] subunit B (guaAB) (Pyrococcus abyssi (strain GE5 / Orsay)).